Here is a 221-residue protein sequence, read N- to C-terminus: Ras-related protein RabS (221 aa).

16-23 (GDNQCGKS) contributes to the GTP binding site. Residues 38–47 (GIQLWHGIEI) carry the Effector region motif. GTP-binding positions include 71-75 (DGNGG) and 137-140 (NKCD). A Cysteine methyl ester modification is found at Cys218. The S-geranylgeranyl cysteine moiety is linked to residue Cys218. Residues 219 to 221 (IIN) constitute a propeptide, removed in mature form.

The protein belongs to the small GTPase superfamily. Rab family.

Its subcellular location is the cell membrane. This is Ras-related protein RabS (rabS) from Dictyostelium discoideum (Social amoeba).